Here is a 366-residue protein sequence, read N- to C-terminus: RISC-loading complex subunit TARBP2 (366 aa).

Sufficient for interaction with PRKRA regions lie at residues 22 to 105 (MLAA…EPAL), 152 to 234 (SPQQ…DARD), and 287 to 366 (LGAL…AGSK). In terms of domain architecture, DRBM 1 spans 30–97 (TPISLLQEYG…AEVALKHLKG (68 aa)). Position 152 is a phosphoserine (S152). DRBM domains are found at residues 159–227 (NPVG…RVHT) and 293–361 (ACCR…YLKI). A sufficient for interaction with DICER1 region spans residues 228 to 366 (VPLDARDGNE…QYLKIMAGSK (139 aa)).

Belongs to the TARBP2 family. In terms of assembly, self-associates. Component of the RISC loading complex (RLC), or micro-RNA (miRNA) loading complex (miRLC), which is composed of DICER1, AGO2 and TARBP2. Note that the trimeric RLC/miRLC is also referred to as RISC. Interacts with EIF2AK2/PKR and inhibits its protein kinase activity. Interacts with DHX9 and PRKRA. Interacts with DICER1, AGO2, MOV10, EIF6 and RPL7A (60S ribosome subunit); they form a large RNA-induced silencing complex (RISC). Interacts with IRF7; this interaction prevents IRF7 phosphorylation and activation. As to quaternary structure, (Microbial infection) Interacts with FTSJ3; forms a complex with FTSJ3 and HIV-1 TAR RNA. (Microbial infection) Interacts with ebolavirus VP30; this interaction, which occurs only in the presence of siRNA, prevents TARBP2 binding to DICER1 and thus allows the virus to counteract host RNA silencing. In terms of assembly, (Microbial infection) Interacts with ebolavirus VP35; this interaction prevents TARBP2 binding to DICER1 and thus allows the virus to counteract host RNA silencing.

The protein resides in the cytoplasm. It localises to the perinuclear region. The protein localises to the nucleus. Required for formation of the RNA induced silencing complex (RISC). Component of the RISC loading complex (RLC), also known as the micro-RNA (miRNA) loading complex (miRLC), which is composed of DICER1, AGO2 and TARBP2. Within the RLC/miRLC, DICER1 and TARBP2 are required to process precursor miRNAs (pre-miRNAs) to mature miRNAs and then load them onto AGO2. AGO2 bound to the mature miRNA constitutes the minimal RISC and may subsequently dissociate from DICER1 and TARBP2. May also play a role in the production of short interfering RNAs (siRNAs) from double-stranded RNA (dsRNA) by DICER1. Binds in vitro to the PRM1 3'-UTR. Seems to act as a repressor of translation. For some pre-miRNA substrates, may also alter the choice of cleavage site by DICER1. Negatively regulates IRF7-mediated IFN-beta signaling triggered by viral infection by inhibiting the phosphorylation of IRF7 and promoting its 'Lys'-48-linked ubiquitination and degradation. In terms of biological role, (Microbial infection) Binds to the HIV-1 TAR RNA which is located in the long terminal repeat (LTR) of HIV-1, and stimulates translation of TAR-containing RNAs. This is achieved in part at least by binding to and inhibiting EIF2AK2/PKR, thereby reducing phosphorylation and inhibition of EIF2S1/eIF-2-alpha. May also promote translation of TAR-containing RNAs independently of EIF2AK2/PKR. Mediates recruitment of FTSJ3 methyltransferase to HIV-1 RNA, leading to 2'-O-methylation of the viral genome, allowing HIV-1 to escape the innate immune system. The sequence is that of RISC-loading complex subunit TARBP2 from Homo sapiens (Human).